Here is an 896-residue protein sequence, read N- to C-terminus: Protein translocase subunit SecA (896 aa).

ATP contacts are provided by residues Q87, 105–109, and D507; that span reads GEGKT. The disordered stretch occupies residues 853-879; sequence ESLSENDEASETQTFRRQEKKIGRNDP. Residues 866-876 are compositionally biased toward basic and acidic residues; it reads TFRRQEKKIGR. The Zn(2+) site is built by C880, C882, C891, and H892.

Belongs to the SecA family. As to quaternary structure, monomer and homodimer. Part of the essential Sec protein translocation apparatus which comprises SecA, SecYEG and auxiliary proteins SecDF-YajC and YidC. Zn(2+) serves as cofactor.

The protein localises to the cell inner membrane. Its subcellular location is the cytoplasm. It carries out the reaction ATP + H2O + cellular proteinSide 1 = ADP + phosphate + cellular proteinSide 2.. Part of the Sec protein translocase complex. Interacts with the SecYEG preprotein conducting channel. Has a central role in coupling the hydrolysis of ATP to the transfer of proteins into and across the cell membrane, serving both as a receptor for the preprotein-SecB complex and as an ATP-driven molecular motor driving the stepwise translocation of polypeptide chains across the membrane. The chain is Protein translocase subunit SecA from Legionella pneumophila subsp. pneumophila (strain Philadelphia 1 / ATCC 33152 / DSM 7513).